The following is a 286-amino-acid chain: Polyamine aminopropyltransferase (286 aa).

A PABS domain is found at 3-240 (DLWYSESHAD…GHWLFGFASK (238 aa)). Q32 is an S-methyl-5'-thioadenosine binding site. Spermidine-binding residues include H63 and D87. S-methyl-5'-thioadenosine is bound by residues E107 and 139–140 (DG). Residue D158 is the Proton acceptor of the active site. 158–161 (DSTD) contributes to the spermidine binding site. P165 serves as a coordination point for S-methyl-5'-thioadenosine.

Belongs to the spermidine/spermine synthase family. Homodimer or homotetramer.

Its subcellular location is the cytoplasm. The enzyme catalyses S-adenosyl 3-(methylsulfanyl)propylamine + putrescine = S-methyl-5'-thioadenosine + spermidine + H(+). Its pathway is amine and polyamine biosynthesis; spermidine biosynthesis; spermidine from putrescine: step 1/1. Functionally, catalyzes the irreversible transfer of a propylamine group from the amino donor S-adenosylmethioninamine (decarboxy-AdoMet) to putrescine (1,4-diaminobutane) to yield spermidine. This Clostridium acetobutylicum (strain ATCC 824 / DSM 792 / JCM 1419 / IAM 19013 / LMG 5710 / NBRC 13948 / NRRL B-527 / VKM B-1787 / 2291 / W) protein is Polyamine aminopropyltransferase.